We begin with the raw amino-acid sequence, 475 residues long: Ammonium transporter 2 (475 aa).

11 helical membrane-spanning segments follow: residues 27-47 (AATLVGLQSMPGLVILYASIV), 55-75 (SAFMALYAFAAVLLCWVLLCY), 120-140 (LVYFQFTFAAITTILVAGSVL), 148-168 (WMAFVPLWLIFSYTVGAYSIW), 183-203 (GGYVIHLSSGVAGFVAAYWVG), 218-238 (VLLMLAGAGLLWMGWSGFNGG), 254-274 (TNLSAATSLLVWTTLDVIFFG), 279-299 (IGAIQGMVTGLAGVTPGAGLI), 302-322 (WAAIIIGVVSGTAPWASMMII), 336-356 (LAVFYTHAVAGLLGGIMTGLF), and 389-409 (AGAAFIAVWNVVSTTIILLAI).

The protein belongs to the ammonia transporter channel (TC 1.A.11.2) family. As to expression, higher expression in shoots than roots.

The protein localises to the cell membrane. High affinity ammonium transporter that may play an important role in moving ammonium between the apoplast and symplast of cells throughout the plant. Does not transport methylammonium. In Arabidopsis thaliana (Mouse-ear cress), this protein is Ammonium transporter 2 (AMT2).